We begin with the raw amino-acid sequence, 610 residues long: Protein SAN1 (610 aa).

Positions 1–10 (MSESGQEQNR) are enriched in polar residues. 2 disordered regions span residues 1-36 (MSES…NGGA) and 176-231 (VDST…PSIP). Positions 11 to 36 (GTNTSPNNAENNNNSNAASGPLNGGA) are enriched in low complexity. Over residues 194–203 (EGTKKRKDNE) the composition is skewed to basic and acidic residues. Residues 210–223 (TADNDSNPSITNAT) are compositionally biased toward polar residues. Residues 240–280 (NDEETNPSYKHSPIKLPCGHIFGRECIYKWSRLENSCPLCR) form an RING-type zinc finger. Disordered regions lie at residues 318 to 348 (TAVN…ASSG), 360 to 453 (VPQN…TDPH), 471 to 502 (GTSD…TTQG), 514 to 554 (GHFT…GVAS), and 569 to 610 (NNNS…RSSQ). Polar residues predominate over residues 319–348 (AVNSTNENSSAPSENTSNTTVPTIGNASSG). Low complexity-rich tracts occupy residues 384–406 (NGPS…NQSP) and 425–447 (PSAS…NTSS). Over residues 471-492 (GTSDTSATTAPGAQTVHNQGRN) the composition is skewed to polar residues. Residues 493–502 (DSSSSDTTQG) are compositionally biased toward low complexity. 2 stretches are compositionally biased toward polar residues: residues 533 to 554 (QQRG…GVAS) and 592 to 610 (DTTI…RSSQ).

In terms of biological role, plays a specific role in mating-type regulation of yeast, by acting post-translationally to control the stability or activity of the SIR4 proteins. This Saccharomyces cerevisiae (strain ATCC 204508 / S288c) (Baker's yeast) protein is Protein SAN1 (SAN1).